The chain runs to 463 residues: Glucagon-like peptide 1 receptor (463 aa).

The signal sequence occupies residues 1-21 (MASTPSLLRLALLLLGAVGRA). Topologically, residues 22–139 (GPRPQGTTVS…KRGERNFPEE (118 aa)) are extracellular. 3 cysteine pairs are disulfide-bonded: Cys46/Cys71, Cys62/Cys104, and Cys85/Cys126. Residues Asn63, Asn82, and Asn115 are each glycosylated (N-linked (GlcNAc...) asparagine). The helical transmembrane segment at 140–164 (QLLSLYIIYTVGYALSFSALVIASA) threads the bilayer. Residues 165-175 (ILVGFRHLHCT) lie on the Cytoplasmic side of the membrane. Residues 176 to 201 (RNYIHLNLFASFILRALSVFIKDAAL) traverse the membrane as a helical segment. The Extracellular portion of the chain corresponds to 202–227 (KWMYSTAAQQHQWDGLLSYQDSLGCR). Residues Cys226 and Cys296 are joined by a disulfide bond. A helical transmembrane segment spans residues 228–251 (LVFLLMQYCVAANYYWLLVEGVYL). Residues 252 to 265 (YTLLAFSVFSEQRI) are Cytoplasmic-facing. Residues 266-290 (FKLYLSIGWGVPLLFVIPWGIVKYL) form a helical membrane-spanning segment. Over 291-305 (YEDEGCWTRNSNMNY) the chain is Extracellular. The helical transmembrane segment at 306–328 (WLIIRLPILFAIGVNFLIFIRVI) threads the bilayer. Over 329-348 (CIVVSKLKANLMCKTDIKCR) the chain is Cytoplasmic. ADP-ribosylcysteine is present on Cys341. Arg348 bears the ADP-ribosylarginine mark. Residues 349–370 (LAKSTLTLIPLLGTHEVIFAFV) traverse the membrane as a helical segment. The important for allosteric inhibitor binding stretch occupies residues 352–355 (STLT). Over 371 to 383 (MDEHARGTLRFIK) the chain is Extracellular. A helical membrane pass occupies residues 384–404 (LFTELSFTSFQGLMVAILYCF). The Cytoplasmic segment spans residues 405-463 (VNNEVQMEFRKCWERWRLEHLNIQRDCSMKPLKCPTSSVSSGATVGSSVYAATCQSSYS).

This sequence belongs to the G-protein coupled receptor 2 family. In terms of assembly, may form homodimers and heterodimers with GIPR. N-glycosylation enhances cell surface expression and lengthens receptor half-life by preventing degradation in the ER. As to expression, detected in pancreatic islets (at protein level). Detected in pancreatic islets and lungs.

It localises to the cell membrane. In terms of biological role, G-protein coupled receptor for glucagon-like peptide 1 (GLP-1). Ligand binding triggers activation of a signaling cascade that leads to the activation of adenylyl cyclase and increased intracellular cAMP levels. Plays a role in regulating insulin secretion in response to GLP-1. The sequence is that of Glucagon-like peptide 1 receptor (Glp1r) from Mus musculus (Mouse).